Consider the following 430-residue polypeptide: Tektin-2 (430 aa).

Coiled-coil stretches lie at residues 75-162 and 226-380; these read KEML…FQHL and KNRA…IACK.

This sequence belongs to the tektin family. Microtubule inner protein component of sperm flagellar doublet microtubules. May interact with CCDC172. Tyrosine phosphorylated. In terms of processing, ubiquitinated, leading to its degradation. Deubiquitinated by USP16, promoting its stability.

It localises to the cytoplasm. Its subcellular location is the cytoskeleton. The protein localises to the cilium axoneme. It is found in the flagellum axoneme. The protein resides in the microtubule organizing center. In terms of biological role, microtubule inner protein (MIP) part of the dynein-decorated doublet microtubules (DMTs) in cilia and flagellar axoneme. Plays a key role in the assembly or attachment of the inner dynein arm to microtubules in sperm flagella and tracheal cilia. Forms filamentous polymers in the walls of ciliary and flagellar microtubules. In Rattus norvegicus (Rat), this protein is Tektin-2 (Tekt2).